Consider the following 10624-residue polypeptide: Extracellular matrix-binding protein ebh (10624 aa).

Residues 1–39 (MNYRDKIQKFSIRKYTVGTFSTVIATLVFLGFNTSQAHA) form the signal peptide. Residues 41–59 (ETNQPASVVKQKQQSNNEQ) show a composition bias toward polar residues. 4 disordered regions span residues 41-152 (ETNQ…GNDN), 250-277 (PQRQ…PRSV), 1347-1372 (NEKA…NATT), and 2418-2438 (TITP…TLTA). A compositionally biased stretch (low complexity) spans 65–78 (SQVQNSQNSQNSQS). Over residues 79 to 117 (LSATHENEQPNNSQANLVNQKVAQSSTTNDEQPASQNVN) the composition is skewed to polar residues. The segment covering 130–140 (PDKEESKHKQN) has biased composition (basic and acidic residues). Composition is skewed to polar residues over residues 141–151 (ESQSANKNGND), 250–266 (PQRQ…QTRS), 1360–1372 (YRTT…NATT), and 2427–2438 (HSVSSNPSTLTA). FIVAR domains lie at 2524–2580 (AKNH…VSDA), 2610–2666 (SKNN…ISDE), 2687–2750 (DTHA…VQSA), 2780–2836 (AKTK…IAAE), 2864–2919 (AKTQ…IRQN), 2947–3002 (AKNQ…INTN), 3030–3085 (AKTQ…INDK), 3154–3212 (AMTK…VNQK), 3280–3339 (AMTG…VNNA), 3407–3465 (AMGN…VNRA), 3533–3591 (AMGN…VTEA), 3659–3717 (AMNT…ITQK), 3785–3843 (AMAN…VEAA), 3911–3969 (AMGN…VEQA), 4037–4095 (AMGQ…VTAA), 4163–4221 (AMKG…ITQA), 4289–4347 (QMGN…VEAA), 4415–4473 (AMAN…VENA), 4541–4599 (AMGT…INQI), 4667–4725 (AMGQ…VDRA), 4793–4851 (AMNS…VDNA), 4919–4977 (AMGA…INDM), 5045–5103 (AMTA…VNSA), 5171–5229 (AMKG…ITQA), 5297–5355 (AMHS…VEQA), 5423–5481 (AMGQ…VERA), 5549–5607 (AMTA…VTNA), 5675–5733 (AMKG…INQA), 5801–5859 (AMTN…VETA), 6053–6111 (AMNQ…INQK), 6179–6236 (AMGN…VQAA), 6304–6362 (AMGQ…VEAA), 6430–6488 (AMQR…VEQA), 6556–6614 (AMDQ…VTAA), 6682–6740 (AMNQ…VTQA), 6808–6866 (AMER…VEAA), 6934–6992 (AMGN…VEAA), 7060–7118 (AMDK…INQA), 7186–7244 (AMGN…VEQA), 7312–7370 (AMTQ…ITAA), 7438–7496 (AMTQ…IQQA), 7564–7622 (AMTN…VEQA), 7690–7748 (AMTQ…VAQA), 7816–7874 (AMGT…VTKA), 7942–8000 (AMGN…ITRA), 8068–8129 (AMDQ…ITNE), 8194–8252 (AMEL…VNGA), 8320–8378 (AMGN…VEQA), 8446–8503 (AMHG…INQV), 8571–8629 (LMDA…VSSA), 8697–8755 (AMKA…IDQA), 8823–8881 (AMEA…VEQL), 8949–9007 (AMQA…VEQL), 9075–9133 (AMET…VEQA), 9201–9255 (SMDQ…VDQA), 9323–9382 (AMDQ…VIKL), and 9577–9633 (AMET…INGA). The helical transmembrane segment at 10430-10450 (IKNAIGVVGISGLLASFWFFI) threads the bilayer. A disordered region spans residues 10527 to 10624 (RRKEDEEDVE…KKKKSKKNKK (98 aa)). Composition is skewed to basic and acidic residues over residues 10542–10552 (TDEKVLKDNEH) and 10591–10601 (QKDNQSKDKKS). Positions 10606–10624 (TSKKVAAKKKKKKSKKNKK) are enriched in basic residues.

It is found in the cell membrane. The protein is Extracellular matrix-binding protein ebh (ebh) of Staphylococcus aureus (strain JH1).